A 547-amino-acid polypeptide reads, in one-letter code: MSSAKLGSASEDVSRRDANYHPTVWGDFFLTHSSNFLENNDSILEKHEELKQEVRNLLVVETSDLPSKIQLTDEIIRLGVGYHFETEIKAQLEKLHDHQLHLNFDLLTTYVWFRLLRGHGFSISSDVFKRFKNTKGEFETEDAWTLWCLYEATHLRVDGEDILEEAIQFSRKKLEALLPELSFPLNECVRDALHIPYHRNVQRLAARQYIPQYDAEPTKIESLSLFAKIDFNMLQALHQSVLREASRWWKEFDFPSKLPYARDRIAEGYYWMMGAHFEPKFSLSRKFLNRIIGITPLIDDTYDVYGTLEEVTLFTEAVERWDIEAVKDIPKYMQVIHTGMLGIFEDFKDNLINARGKDYCIDYAIEVFKEIVRSYQREAEYFHTGYVPSYDEYMENSIISGGYKMFIILMLIGRGEFELKETLDWASTIPEMVKASSLIARYIDDLQTYKAEEERGETVSAVRCYMREFGVSEEQACKKMREMIEIEWKRLNKTTLEADEISSSVVIPSLNFTRVLEVMYDKGDGYSDSQGVTKDRIAALLRHAIEI.

Mg(2+)-binding residues include D299, D303, and D444. The DDXXD motif signature appears at 299 to 303; sequence DDTYD.

It belongs to the terpene synthase family. Requires Mg(2+) as cofactor.

The chain is Inactive delta-guaiene synthase (C1) from Aquilaria crassna (Eagle wood).